Here is a 316-residue protein sequence, read N- to C-terminus: MPTFNGSVFMPSAFILIGIPGLESVQCWIGIPFSAMYLIGVIGNSLILVIIKYENSLHIPMYIFLAMLAATDIALNTCILPKMLGIFWFHLPEISFDACLFQMWLIHSFQAIESGILLAMALDRYVAICIPLRHATIFSQQFLTHIGLGVTLRAAILIIPSLGLIKCCLKHYRTTVISHSYCEHMAIVKLATEDIRVNKIYGLFVAFAILGFDIIFITLSYVQIFITVFQLPQKEARFKAFNTCIAHICVFLQFYLLAFFSFFTHRFGSHIPPYIHILLSNLYLLVPPFLNPIVYGVKTKQIRDHIVKVFFFKKVT.

Residues 1-27 (MPTFNGSVFMPSAFILIGIPGLESVQC) lie on the Extracellular side of the membrane. A glycan (N-linked (GlcNAc...) asparagine) is linked at N5. The chain crosses the membrane as a helical span at residues 28–48 (WIGIPFSAMYLIGVIGNSLIL). Residues 49 to 56 (VIIKYENS) lie on the Cytoplasmic side of the membrane. Residues 57–77 (LHIPMYIFLAMLAATDIALNT) traverse the membrane as a helical segment. At 78-101 (CILPKMLGIFWFHLPEISFDACLF) the chain is on the extracellular side. Residues 102-122 (QMWLIHSFQAIESGILLAMAL) traverse the membrane as a helical segment. At 123 to 141 (DRYVAICIPLRHATIFSQQ) the chain is on the cytoplasmic side. A helical membrane pass occupies residues 142-162 (FLTHIGLGVTLRAAILIIPSL). Residues 163-199 (GLIKCCLKHYRTTVISHSYCEHMAIVKLATEDIRVNK) are Extracellular-facing. A helical membrane pass occupies residues 200 to 220 (IYGLFVAFAILGFDIIFITLS). Over 221-240 (YVQIFITVFQLPQKEARFKA) the chain is Cytoplasmic. A helical transmembrane segment spans residues 241 to 261 (FNTCIAHICVFLQFYLLAFFS). At 262–276 (FFTHRFGSHIPPYIH) the chain is on the extracellular side. A helical transmembrane segment spans residues 277–297 (ILLSNLYLLVPPFLNPIVYGV). The Cytoplasmic segment spans residues 298–316 (KTKQIRDHIVKVFFFKKVT).

Belongs to the G-protein coupled receptor 1 family.

The protein resides in the cell membrane. Odorant receptor. The sequence is that of Olfactory receptor 52A5 (OR52A5) from Homo sapiens (Human).